Consider the following 328-residue polypeptide: Malate dehydrogenase (328 aa).

11 to 17 (GAAGQIG) contributes to the NAD(+) binding site. Positions 94 and 100 each coordinate substrate. NAD(+)-binding positions include Asn-107, Gln-114, and 131–133 (VGN). 2 residues coordinate substrate: Asn-133 and Arg-164. His-189 serves as the catalytic Proton acceptor.

Belongs to the LDH/MDH superfamily. MDH type 2 family.

The enzyme catalyses (S)-malate + NAD(+) = oxaloacetate + NADH + H(+). Its function is as follows. Catalyzes the reversible oxidation of malate to oxaloacetate. The polypeptide is Malate dehydrogenase (Xanthomonas axonopodis pv. citri (strain 306)).